Reading from the N-terminus, the 520-residue chain is MPSLVVSGIMERNGGFGELGCFGGSAKDRGLLEDERALQLALDQLCLLGLGEPPAPTAGEDGGGGGGGAPAQPAAPPQPAPPPPPAAPPAAPTAAPAAQTPQPPTAPKGASDAKLCALYKEAELRLKGSSNTTECVPVPTSEHVAEIVGRQGCKIKALRAKTNTYIKTPVRGEEPVFMVTGRREDVATARREIISAAEHFSMIRASRNKSGAAFGVAPALPGQVTIRVRVPYRVVGLVVGPKGATIKRIQQQTNTYIITPSRDRDPVFEITGAPGNVERAREEIETHIAVRTGKILEYNNENDFLAGSPDAAIDSRYSDAWRVHQPGCKPLSTFRQNSLGCIGECGVDSGFEAPRLGEQGGDFGYGGYLFPGYGVGKQDVYYGVAETSPPLWAGQENATPTSVLFSSASSSSSSSAKARAGPPGAHRSPATSAGPELAGLPRRPPGEPLQGFSKLGGGGLRSPGGGRDCMVCFESEVTAALVPCGHNLFCMECAVRICERTDPECPVCHITATQAIRIFS.

A disordered region spans residues 49–111; it reads GLGEPPAPTA…QPPTAPKGAS (63 aa). Over residues 60 to 69 the composition is skewed to gly residues; that stretch reads EDGGGGGGGA. Positions 73-91 are enriched in pro residues; it reads PAAPPQPAPPPPPAAPPAA. 2 consecutive KH domains span residues 132-193 and 223-284; these read TTEC…RREI and QVTI…REEI. Ser-338 is modified (phosphoserine). The segment at 412-461 is disordered; sequence SSSSAKARAGPPGAHRSPATSAGPELAGLPRRPPGEPLQGFSKLGGGGLR. Ser-462 is modified (phosphoserine). The segment at 469-509 adopts an RING-type zinc-finger fold; sequence CMVCFESEVTAALVPCGHNLFCMECAVRICERTDPECPVCH.

Phosphorylated. In terms of tissue distribution, highest levels found in fetal brain and testis. Detected also in thymus, salivary gland and uterus.

It is found in the cytoplasm. The protein resides in the nucleus. The protein localises to the P-body. Functionally, RNA binding protein, may be involved in post-transcriptional regulatory mechanisms. The protein is RNA-binding protein MEX3A (MEX3A) of Homo sapiens (Human).